Reading from the N-terminus, the 1228-residue chain is DNA-directed RNA polymerase subunit beta (1228 aa).

Belongs to the RNA polymerase beta chain family. In terms of assembly, the RNAP catalytic core consists of 2 alpha, 1 beta, 1 beta' and 1 omega subunit. When a sigma factor is associated with the core the holoenzyme is formed, which can initiate transcription.

The catalysed reaction is RNA(n) + a ribonucleoside 5'-triphosphate = RNA(n+1) + diphosphate. In terms of biological role, DNA-dependent RNA polymerase catalyzes the transcription of DNA into RNA using the four ribonucleoside triphosphates as substrates. The polypeptide is DNA-directed RNA polymerase subunit beta (Leptospira biflexa).